The primary structure comprises 229 residues: NAD(P)H-quinone oxidoreductase subunit K, chloroplastic (229 aa).

The [4Fe-4S] cluster site is built by cysteine 43, cysteine 44, cysteine 108, and cysteine 139.

It belongs to the complex I 20 kDa subunit family. As to quaternary structure, NDH is composed of at least 16 different subunits, 5 of which are encoded in the nucleus. The cofactor is [4Fe-4S] cluster.

The protein resides in the plastid. Its subcellular location is the chloroplast thylakoid membrane. It catalyses the reaction a plastoquinone + NADH + (n+1) H(+)(in) = a plastoquinol + NAD(+) + n H(+)(out). The enzyme catalyses a plastoquinone + NADPH + (n+1) H(+)(in) = a plastoquinol + NADP(+) + n H(+)(out). Its function is as follows. NDH shuttles electrons from NAD(P)H:plastoquinone, via FMN and iron-sulfur (Fe-S) centers, to quinones in the photosynthetic chain and possibly in a chloroplast respiratory chain. The immediate electron acceptor for the enzyme in this species is believed to be plastoquinone. Couples the redox reaction to proton translocation, and thus conserves the redox energy in a proton gradient. The chain is NAD(P)H-quinone oxidoreductase subunit K, chloroplastic from Aethionema grandiflorum (Persian stone-cress).